Here is a 130-residue protein sequence, read N- to C-terminus: MSNVEYKGLGRRKSSVAHVKLVPGTGKILINQRKPNEYFPNSLVIQDMEQPLVITDTRKNFDVFVKVVGGGFTGQAGAIRLGIARALLVANNDFRKTLKVSKMLTRDPRAKERKKYGLYGARRSPQFTKR.

The segment at 109 to 130 (RAKERKKYGLYGARRSPQFTKR) is disordered.

It belongs to the universal ribosomal protein uS9 family.

In Malacoplasma penetrans (strain HF-2) (Mycoplasma penetrans), this protein is Small ribosomal subunit protein uS9.